The sequence spans 268 residues: MMQRCLRLPKLLALRRDLHLAQVERQAVVTEAPEAEPQDAFERQYFKERIEISPFQRVFLAAGSSIAALLDPRRHDMIACLGETTGEDALWTILDSMQASEEGQRIMADKPRIHTSTIDFKYLETLPPDTFGAAYVKFLKDNQVTPDSRMAVRFLEEPKLAYLMTRYRECHDLIHTVLDMPTNMLGEVSVKWVEALNTGLPMCYGGAVFGAVRLRPKQRRAYLKHYLPWALENGKRTKPLMPVYWEKRWEQNIHDLRSELGITVLNKA.

4 residues coordinate Zn(2+): histidine 171, aspartate 172, histidine 175, and glutamate 187.

It belongs to the COQ4 family. Component of a multi-subunit COQ enzyme complex. Zn(2+) serves as cofactor.

The protein localises to the mitochondrion inner membrane. The catalysed reaction is a 4-hydroxy-3-methoxy-5-(all-trans-polyprenyl)benzoate + H(+) = a 2-methoxy-6-(all-trans-polyprenyl)phenol + CO2. It functions in the pathway cofactor biosynthesis; ubiquinone biosynthesis. In terms of biological role, lyase that catalyzes the C1-decarboxylation of 4-hydroxy-3-methoxy-5-(all-trans-polyprenyl)benzoic acid into 2-methoxy-6-(all-trans-polyprenyl)phenol during ubiquinone biosynthesis. The polypeptide is Ubiquinone biosynthesis protein COQ4 homolog, mitochondrial (Drosophila erecta (Fruit fly)).